Consider the following 337-residue polypeptide: DNA-directed RNA polymerase subunit alpha (337 aa).

The interval 1–232 is alpha N-terminal domain (alpha-NTD); that stretch reads MVREEVRVCT…IDLFIPFLHA (232 aa). The segment at 266 to 337 is alpha C-terminal domain (alpha-CTD); sequence EISFQCIFID…FAIDLPKNKF (72 aa).

It belongs to the RNA polymerase alpha chain family. As to quaternary structure, in plastids the minimal PEP RNA polymerase catalytic core is composed of four subunits: alpha, beta, beta', and beta''. When a (nuclear-encoded) sigma factor is associated with the core the holoenzyme is formed, which can initiate transcription.

The protein localises to the plastid. It is found in the chloroplast. It catalyses the reaction RNA(n) + a ribonucleoside 5'-triphosphate = RNA(n+1) + diphosphate. DNA-dependent RNA polymerase catalyzes the transcription of DNA into RNA using the four ribonucleoside triphosphates as substrates. The polypeptide is DNA-directed RNA polymerase subunit alpha (Buxus microphylla (Littleleaf boxwood)).